Reading from the N-terminus, the 84-residue chain is Cell division topological specificity factor (84 aa).

The protein belongs to the MinE family.

In terms of biological role, prevents the cell division inhibition by proteins MinC and MinD at internal division sites while permitting inhibition at polar sites. This ensures cell division at the proper site by restricting the formation of a division septum at the midpoint of the long axis of the cell. This chain is Cell division topological specificity factor, found in Pseudomonas aeruginosa (strain LESB58).